The sequence spans 753 residues: 5-methyltetrahydropteroyltriglutamate--homocysteine methyltransferase (753 aa).

5-methyltetrahydropteroyltri-L-glutamate contacts are provided by residues Arg-17 to Lys-20 and Lys-117. Residues Ile-431–Ser-433 and Glu-484 contribute to the L-homocysteine site. Residues Ile-431 to Ser-433 and Glu-484 each bind L-methionine. Residues Arg-515–Cys-516 and Trp-561 contribute to the 5-methyltetrahydropteroyltri-L-glutamate site. Asp-599 is an L-homocysteine binding site. Asp-599 serves as a coordination point for L-methionine. Glu-605 serves as a coordination point for 5-methyltetrahydropteroyltri-L-glutamate. Zn(2+) is bound by residues His-641, Cys-643, and Glu-665. The Proton donor role is filled by His-694. Cys-726 serves as a coordination point for Zn(2+).

It belongs to the vitamin-B12 independent methionine synthase family. Zn(2+) serves as cofactor.

The enzyme catalyses 5-methyltetrahydropteroyltri-L-glutamate + L-homocysteine = tetrahydropteroyltri-L-glutamate + L-methionine. Its pathway is amino-acid biosynthesis; L-methionine biosynthesis via de novo pathway; L-methionine from L-homocysteine (MetE route): step 1/1. Catalyzes the transfer of a methyl group from 5-methyltetrahydrofolate to homocysteine resulting in methionine formation. The sequence is that of 5-methyltetrahydropteroyltriglutamate--homocysteine methyltransferase from Shigella sonnei (strain Ss046).